A 298-amino-acid chain; its full sequence is Small ribosomal subunit protein uS2 (298 aa).

The disordered stretch occupies residues 272–298 (EGGDWAASSAAPAGESWAEAQPTEAKW).

It belongs to the universal ribosomal protein uS2 family. As to quaternary structure, component of the small ribosomal subunit. Mature ribosomes consist of a small (40S) and a large (60S) subunit. The 40S subunit contains about 33 different proteins and 1 molecule of RNA (18S). The 60S subunit contains about 49 different proteins and 3 molecules of RNA (25S, 5.8S and 5S). Interacts with rps21.

It localises to the cytoplasm. Required for the assembly and/or stability of the 40S ribosomal subunit. Required for the processing of the 20S rRNA-precursor to mature 18S rRNA in a late step of the maturation of 40S ribosomal subunits. This chain is Small ribosomal subunit protein uS2 (rps0), found in Aspergillus niger (strain ATCC MYA-4892 / CBS 513.88 / FGSC A1513).